The chain runs to 1573 residues: Synaptojanin-1 (1573 aa).

Positions 119-442 constitute an SAC domain; that stretch reads VRKVLNSGNF…GDSISKIYAG (324 aa). A catalytic region spans residues 500–899; the sequence is GSLRVSEQTL…GPPDGTVLVS (400 aa). Phosphoserine is present on residues serine 820 and serine 830. Positions 902–971 constitute an RRM domain; the sequence is SSLPENNFFD…RTITIALKSP (70 aa). Low complexity predominate over residues 1029–1054; that stretch reads HLQPSSSSGLGTSPSSSPRTSPCQSP. 4 disordered regions span residues 1029–1322, 1341–1360, 1370–1463, and 1535–1573; these read HLQP…PLKI, SVQTSPVPTPDPKRLIQLPS, VSCM…GFKD, and SRRPPPPPVPLLPPGTSPPVDPFTTLASKASPTLDFTER. The residue at position 1053 (serine 1053) is a Phosphoserine. Residues 1108 to 1130 are compositionally biased toward pro residues; sequence PPPPRPVAPPTRPAPPQRPPPPS. Residues serine 1150 and serine 1178 each carry the phosphoserine modification. Arginine 1201 bears the Omega-N-methylarginine mark. Position 1220 is a phosphothreonine (threonine 1220). The span at 1221-1234 shows a compositional bias: polar residues; sequence PESQSKTSETSKGS. Residue serine 1292 is modified to Phosphoserine. A compositionally biased stretch (low complexity) spans 1293–1304; it reads SHSLPSEASSQP. Positions 1313–1322 are enriched in basic and acidic residues; that stretch reads DGKRESPLKI. 2 positions are modified to phosphoserine: serine 1318 and serine 1345. Threonine 1349 carries the phosphothreonine modification. Over residues 1382-1407 the composition is skewed to polar residues; sequence RSQSQENMRSSPNPFITGLTRTNPFS. Tandem repeats lie at residues 1396–1398, 1406–1408, and 1417–1419. A 3 X 3 AA repeats of N-P-F region spans residues 1396–1419; it reads FITGLTRTNPFSDRTAAPGNPFRA. The span at 1536 to 1555 shows a compositional bias: pro residues; that stretch reads RRPPPPPVPLLPPGTSPPVD. Serine 1551 and serine 1565 each carry phosphoserine.

This sequence belongs to the synaptojanin family. The protein in the central section; belongs to the inositol 1,4,5-trisphosphate 5-phosphatase family. Interacts with ASH/GRB2. Interacts with PACSIN1, PACSIN2 and PACSIN3. Interacts with AMPH, SH3GL1, SH3GL2 and SH3GL3. Interacts with MYO1E (via SH3 domain). Interacts with BIN1 and DNM1. Interacts with EPS15.

It localises to the cytoplasm. Its subcellular location is the perinuclear region. It catalyses the reaction a 1,2-diacyl-sn-glycero-3-phospho-(1D-myo-inositol-4,5-bisphosphate) + H2O = a 1,2-diacyl-sn-glycero-3-phospho-(1D-myo-inositol 4-phosphate) + phosphate. Phosphatase that acts on various phosphoinositides, including phosphatidylinositol 4-phosphate, phosphatidylinositol (4,5)-bisphosphate and phosphatidylinositol (3,4,5)-trisphosphate. Has a role in clathrin-mediated endocytosis. Hydrolyzes PIP2 bound to actin regulatory proteins resulting in the rearrangement of actin filaments downstream of tyrosine kinase and ASH/GRB2. This chain is Synaptojanin-1 (SYNJ1), found in Homo sapiens (Human).